A 345-amino-acid chain; its full sequence is MLTMRICLRATYTQKEYKWESTVNEQISAASLYDRVARVIPKAEWMGFQDDVEAILELKRKRNAVILAHNYQTPEIFHGVADIVGDSLALARKAMEVEADVIVLAGVHFMAETAKLLNPEKTVLIPDMAAGCSLADSITPEDIALLRKAYPGVPVVTYVNTSAAVKAASDICCTSGNARQVVESLGVPRVLMLPDEYLAKNVAKETSVELIAWRGHCEVHELFTADDIRELRESHPGVIVLAHPECPPEVVDAADFSGSTAVMSDYVGRERPARVVLLTECSMSDNVAVHHPDVEFIRPCNLCPHMKRITLGNIRTALEENRHEVTVDPAIAGAARRAVERMLQI.

Iminosuccinate contacts are provided by His69 and Ser87. Cys132 lines the [4Fe-4S] cluster pocket. Iminosuccinate-binding positions include 158-160 and Ser175; that span reads YVN. Residue Cys217 participates in [4Fe-4S] cluster binding. Iminosuccinate-binding positions include 243–245 and Thr260; that span reads HPE. Cys303 contributes to the [4Fe-4S] cluster binding site.

The protein belongs to the quinolinate synthase family. Type 2 subfamily. [4Fe-4S] cluster serves as cofactor.

The protein resides in the cytoplasm. It catalyses the reaction iminosuccinate + dihydroxyacetone phosphate = quinolinate + phosphate + 2 H2O + H(+). It participates in cofactor biosynthesis; NAD(+) biosynthesis; quinolinate from iminoaspartate: step 1/1. In terms of biological role, catalyzes the condensation of iminoaspartate with dihydroxyacetone phosphate to form quinolinate. The sequence is that of Quinolinate synthase from Agrobacterium fabrum (strain C58 / ATCC 33970) (Agrobacterium tumefaciens (strain C58)).